Consider the following 33-residue polypeptide: uncharacterized protein (33 aa).

This is an uncharacterized protein from Staphylococcus aureus (strain MW2).